Consider the following 146-residue polypeptide: Large ribosomal subunit protein uL15 (146 aa).

The disordered stretch occupies residues 1 to 39; sequence MTLKLHNLRPAPGAKTAKTRVGRGEGSKGKTAGRGTKGT.

Belongs to the universal ribosomal protein uL15 family. In terms of assembly, part of the 50S ribosomal subunit.

Its function is as follows. Binds to the 23S rRNA. This chain is Large ribosomal subunit protein uL15, found in Nocardioides sp. (strain ATCC BAA-499 / JS614).